The primary structure comprises 113 residues: Ig heavy chain V region 36-60 (113 aa).

This Mus musculus (Mouse) protein is Ig heavy chain V region 36-60.